Here is a 459-residue protein sequence, read N- to C-terminus: Serine permease SerP1 (459 aa).

The next 12 helical transmembrane spans lie at 19–39 (IQLIAIAGTIGTGLFLGAGKT), 42–62 (MTGPSVIFAYILIGIAMFFFL), 97–117 (SYWLVIVFVCISELTAIGTYI), 119–139 (FWLPHLPLWLIEIVMLALLFG), 153–173 (FWFAMIKVAAILGMIVTAIIL), 212–232 (FVGALQMVMFAFTSMEFIGMT), 254–274 (ILLFYVGALLAIMAIFNWHYI), 281–301 (FVIVFQLIGIKWAAALINFVV), 341–361 (AGIPINALYMATALSLLAPVL), 370–390 (AFNFAASCTTNLFLVVYFITL), 412–432 (PTIAVPFIAIIFAIVFASLFF), and 436–456 (TFYPALGAIVWTLIFGLYSHF).

It belongs to the amino acid-polyamine-organocation (APC) superfamily. Amino acid transporter (AAT) (TC 2.A.3.1) family.

The protein resides in the cell membrane. In terms of biological role, transports L-serine, L-threonine and L-cysteine with high affinity. Stereoselective, with a strong preference for L-serine. Is the main L-serine transporter and is responsible for optimal growth in media containing free amino acids as the sole source of amino acids. Is also the main transporter for L-threonine. The sequence is that of Serine permease SerP1 from Lactococcus lactis subsp. cremoris (strain MG1363).